The primary structure comprises 1066 residues: Thyrotropin-releasing hormone-degrading ectoenzyme (1066 aa).

Over residues 1 to 14 (MALDGERGEQEEEK) the composition is skewed to basic and acidic residues. Positions 1 to 43 (MALDGERGEQEEEKKKKKKKKKRKKKEEEGAEKSSSPFAATMG) are disordered. Over 1–81 (MALDGERGEQ…ERHIAVHKRL (81 aa)) the chain is Cytoplasmic. Over residues 15–25 (KKKKKKKKRKK) the composition is skewed to basic residues. Thr71 is modified (phosphothreonine; by PKC). A helical; Signal-anchor for type II membrane protein transmembrane segment spans residues 82 to 102 (VLAFAVSIVALLAVTMLAVLL). The Extracellular portion of the chain corresponds to 103 to 1066 (SLRFDECGAS…FQWLGKAMRH (964 aa)). The disordered stretch occupies residues 118-176 (TDGGLGGFPERDSNSSFPGSARRNHHAGGESSQRESGEVGTPGTPSAQPPSEEEREQWQ). Asn131, Asn202, Asn217, Asn264, and Asn380 each carry an N-linked (GlcNAc...) asparagine glycan. 446–450 (AAMEN) serves as a coordination point for substrate. His482 is a Zn(2+) binding site. The active-site Proton acceptor is Glu483. Residues His486 and Glu505 each contribute to the Zn(2+) site. N-linked (GlcNAc...) asparagine glycans are attached at residues Asn647, Asn676, Asn691, Asn705, Asn726, Asn842, and Asn948.

Belongs to the peptidase M1 family. In terms of assembly, homodimer; disulfide-linked. Zn(2+) serves as cofactor.

It is found in the membrane. It catalyses the reaction Release of the N-terminal pyroglutamyl group from pGlu-|-His-Xaa tripeptides and pGlu-|-His-Xaa-Gly tetrapeptides.. Functionally, specific inactivation of TRH after its release. The sequence is that of Thyrotropin-releasing hormone-degrading ectoenzyme (Trhde) from Mus musculus (Mouse).